A 104-amino-acid polypeptide reads, in one-letter code: Putative arsenate reductase (104 aa).

Cys12 is a catalytic residue.

This sequence belongs to the ArsC family.

It carries out the reaction [glutaredoxin]-dithiol + arsenate + glutathione + H(+) = glutathionyl-S-S-[glutaredoxin] + arsenite + H2O. Its function is as follows. Reduction of arsenate [As(V)] to arsenite [As(III)]. This protein expands the substrate specificity of ArsAB pump which can extrude arsenite and antimonite to allow for arsenate pumping and resistance. The sequence is that of Putative arsenate reductase (yfjU) from Escherichia coli (strain K12).